Reading from the N-terminus, the 179-residue chain is ATP synthase subunit delta (179 aa).

This sequence belongs to the ATPase delta chain family. In terms of assembly, F-type ATPases have 2 components, F(1) - the catalytic core - and F(0) - the membrane proton channel. F(1) has five subunits: alpha(3), beta(3), gamma(1), delta(1), epsilon(1). F(0) has three main subunits: a(1), b(2) and c(10-14). The alpha and beta chains form an alternating ring which encloses part of the gamma chain. F(1) is attached to F(0) by a central stalk formed by the gamma and epsilon chains, while a peripheral stalk is formed by the delta and b chains.

It localises to the cell inner membrane. Functionally, f(1)F(0) ATP synthase produces ATP from ADP in the presence of a proton or sodium gradient. F-type ATPases consist of two structural domains, F(1) containing the extramembraneous catalytic core and F(0) containing the membrane proton channel, linked together by a central stalk and a peripheral stalk. During catalysis, ATP synthesis in the catalytic domain of F(1) is coupled via a rotary mechanism of the central stalk subunits to proton translocation. This protein is part of the stalk that links CF(0) to CF(1). It either transmits conformational changes from CF(0) to CF(1) or is implicated in proton conduction. This Acidithiobacillus ferridurans protein is ATP synthase subunit delta.